A 267-amino-acid polypeptide reads, in one-letter code: Energy-coupling factor transporter transmembrane protein EcfT (267 aa).

The next 5 helical transmembrane spans lie at 30 to 50 (FWYV…LLVA), 67 to 87 (WAGL…QVLF), 110 to 130 (ALVI…LTAT), 152 to 172 (VPVN…PTIM), and 247 to 267 (SIAL…RILL).

Belongs to the energy-coupling factor EcfT family. Forms a stable energy-coupling factor (ECF) transporter complex composed of 2 membrane-embedded substrate-binding proteins (S component), 2 ATP-binding proteins (A component) and 2 transmembrane proteins (T component). May be able to interact with more than 1 S component at a time.

The protein resides in the cell membrane. Transmembrane (T) component of an energy-coupling factor (ECF) ABC-transporter complex. Unlike classic ABC transporters this ECF transporter provides the energy necessary to transport a number of different substrates. This chain is Energy-coupling factor transporter transmembrane protein EcfT, found in Limosilactobacillus fermentum (strain CECT 5716 / Lc40) (Lactobacillus fermentum).